Reading from the N-terminus, the 147-residue chain is Hemoglobin subunit gamma (147 aa).

One can recognise a Globin domain in the interval 3–147 (NFTAEDKAAI…VASALASRYH (145 aa)). Heme b is bound by residues H64 and H93.

It belongs to the globin family. In terms of assembly, heterotetramer of two alpha chains and two gamma chains in fetal hemoglobin (Hb F). Red blood cells.

Functionally, gamma chains make up the fetal hemoglobin F, in combination with alpha chains. In Lagothrix lagotricha (Brown woolly monkey), this protein is Hemoglobin subunit gamma (HBG).